Here is a 358-residue protein sequence, read N- to C-terminus: Homoserine O-acetyltransferase (358 aa).

One can recognise an AB hydrolase-1 domain in the interval 41-343 (NAVLICHALT…DYGHDAFLVD (303 aa)). The active-site Nucleophile is the Ser-143. Residue Arg-212 coordinates substrate. Active-site residues include Asp-304 and His-337. Asp-338 is a substrate binding site.

As to quaternary structure, homodimer.

Its subcellular location is the cytoplasm. The catalysed reaction is L-homoserine + acetyl-CoA = O-acetyl-L-homoserine + CoA. Its pathway is amino-acid biosynthesis; L-methionine biosynthesis via de novo pathway; O-acetyl-L-homoserine from L-homoserine: step 1/1. Transfers an acetyl group from acetyl-CoA to L-homoserine, forming acetyl-L-homoserine. Utilizes a ping-pong kinetic mechanism in which the acetyl group of acetyl-CoA is initially transferred to the enzyme to form an acetyl-enzyme intermediate before subsequent transfer to homoserine to form the final product, O-acetylhomoserine. This chain is Homoserine O-acetyltransferase, found in Haemophilus influenzae (strain ATCC 51907 / DSM 11121 / KW20 / Rd).